The chain runs to 314 residues: Short-chain dehydrogenase/reductase sthC (314 aa).

Over residues 1–10 (MAPAETTGNV) the composition is skewed to polar residues. The segment at 1–27 (MAPAETTGNVQRPEAGKQSMGSFWTQM) is disordered. NADP(+)-binding residues include Val56, Lys80, Asp105, Asn132, and Arg167. Ser191 functions as the Proton donor in the catalytic mechanism. 2 residues coordinate NADP(+): Tyr222 and Lys226. Tyr222 functions as the Proton acceptor in the catalytic mechanism. Lys226 functions as the Lowers pKa of active site Tyr in the catalytic mechanism.

This sequence belongs to the short-chain dehydrogenases/reductases (SDR) family.

The enzyme catalyses dehydroprobetaenone I + AH2 = probetaenone I + A. It catalyses the reaction betaenone C + AH2 = betaenone B + A. It functions in the pathway mycotoxin biosynthesis. Its function is as follows. Short-chain dehydrogenase/reductase; part of the gene cluster that mediates the biosynthesis of the phytotoxin stemphyloxin II. The first step of the pathway is the synthesis of dehydroprobetaenone I by the polyketide synthase sthA and the enoyl reductase sthE via condensation of one acetyl-CoA starter unit with 7 malonyl-CoA units and 5 methylations. The C-terminal reductase (R) domain of sthA catalyzes the reductive release of the polyketide chain. Because sthA lacks a designated enoylreductase (ER) domain, the required activity is provided the enoyl reductase sthE. The short-chain dehydrogenase/reductase sthC then catalyzes reduction of dehydroprobetaenone I to probetaenone I. The cytochrome P450 monooxygenase sthF catalyzes successive epoxidation, oxidation (resulting from epoxide opening) and hydroxylation to install a tertiary alcohol in the decaline ring to yield betaenone C from dehydroprobetaenone I and betaenone B from probetaenone I. The FAD-linked oxidoreductase sthB is responsible for the conversion of betaenone C to betaenone A via an intramolecular aldol reaction between C-1 and C-17 to form the bridged tricyclic system in betaenone A. Finally, the cytochrome P450 monooxygenase sthD catalyzes the hydroxylation of C-15 to afford the final metabolite stemphyloxin II. The protein is Short-chain dehydrogenase/reductase sthC of Phaeosphaeria nodorum (strain SN15 / ATCC MYA-4574 / FGSC 10173) (Glume blotch fungus).